We begin with the raw amino-acid sequence, 297 residues long: MSSLAAPQTGLLRQYLVLTKPRVTQLAVFCAVIGMFLAAPGMPDLSHVVFGTLGIWLLAAAAFAINCLIEQEVDARMLRTARRATARGTISDIQVLSLSGLLGGAGMLVLYHLVNPLTMWLTFATFVGYAIIYTVILKPRTPQNIVIGGLSGAMPPALGWAAVADSVPAEAWVLVLIIFIWTPPHFWALALYRNNDYIKAGLPMLPVTHGQQFTRLHILLYSFALLATTLLPYAIRMSGALYLASALALGGMFVWYAWRLYREYSDALARRLFRFSILYLALLFGALLIDHWVGLLR.

The next 9 membrane-spanning stretches (helical) occupy residues 23–43 (VTQL…PGMP), 49–69 (VFGT…NCLI), 93–113 (IQVL…LYHL), 117–137 (LTMW…TVIL), 144–164 (NIVI…AAVA), 171–191 (AWVL…ALAL), 215–235 (RLHI…PYAI), 238–258 (SGAL…WYAW), and 275–295 (FSIL…WVGL).

It belongs to the UbiA prenyltransferase family. Protoheme IX farnesyltransferase subfamily.

Its subcellular location is the cell inner membrane. The enzyme catalyses heme b + (2E,6E)-farnesyl diphosphate + H2O = Fe(II)-heme o + diphosphate. It functions in the pathway porphyrin-containing compound metabolism; heme O biosynthesis; heme O from protoheme: step 1/1. Functionally, converts heme B (protoheme IX) to heme O by substitution of the vinyl group on carbon 2 of heme B porphyrin ring with a hydroxyethyl farnesyl side group. The chain is Protoheme IX farnesyltransferase from Bordetella bronchiseptica (strain ATCC BAA-588 / NCTC 13252 / RB50) (Alcaligenes bronchisepticus).